The sequence spans 2248 residues: Zinc finger protein 407 (2248 aa).

Residues 1-32 (MMDSENKPENDEDEKINKEAQDLTKLSSHNED) show a composition bias toward basic and acidic residues. The interval 1–84 (MMDSENKPEN…RRKLDEAEPL (84 aa)) is disordered. C2H2-type zinc fingers lie at residues 186–208 (LKCS…AESH), 215–238 (HTCC…KQAH), and 244–268 (FSCD…GKTH). Disordered stretches follow at residues 291–322 (KKSR…GLRN) and 494–515 (SETQ…GLHS). A compositionally biased stretch (polar residues) spans 494-504 (SETQEAEQGQG). 3 C2H2-type zinc fingers span residues 528 to 551 (CACT…KRCH), 557 to 581 (FYCR…SNQH), and 615 to 639 (FLCT…TEKH). Residues 667–700 (ESENAKESMDDSGKASQEEPLKSRVSHGNEVRHS) are disordered. Basic and acidic residues predominate over residues 669–699 (ENAKESMDDSGKASQEEPLKSRVSHGNEVRH). The segment at 705–728 (FQCKKCFYKTRSSTVLTRHIKLRH) adopts a C2H2-type 7 zinc-finger fold. Positions 821–847 (LSQSGGSTKDDELASTTTPKRGRPKGN) are disordered. 2 consecutive C2H2-type zinc fingers follow at residues 850–873 (RTCS…RRKH) and 879–903 (YLCK…TKKH). The disordered stretch occupies residues 910 to 962 (EASGKHSSDIIVGPEGGSLEAGKKNAGSAVTMSDEHANKPAESPTSVLEKPDR). 2 consecutive C2H2-type zinc fingers follow at residues 1017-1040 (NKCL…KRKH) and 1046-1070 (FYCM…TEKH). S1262 is subject to Phosphoserine. C2H2-type zinc fingers lie at residues 1444–1468 (FHCL…SAGH) and 1486–1509 (FKCV…KGQH). The C2H2-type 14; degenerate zinc finger occupies 1537-1561 (NVCKYCGKMCRSSNSMAFLAHIRTH). 8 C2H2-type zinc fingers span residues 1567–1589 (FKCK…VKRH), 1595–1618 (YKCH…LGKH), 1628–1650 (FTCH…MKLH), 1656–1680 (FKCT…YRTH), 1686–1708 (FLCD…RRQH), 1714–1736 (FKCD…KRVH), 1742–1767 (YRCP…TGKH), and 1773–1796 (YNCP…KEQH).

The protein localises to the nucleus. In terms of biological role, may be involved in transcriptional regulation. The polypeptide is Zinc finger protein 407 (ZNF407) (Homo sapiens (Human)).